Here is a 165-residue protein sequence, read N- to C-terminus: 3-isopropylmalate dehydratase small subunit (165 aa).

It belongs to the LeuD family. LeuD type 2 subfamily. In terms of assembly, heterodimer of LeuC and LeuD.

The enzyme catalyses (2R,3S)-3-isopropylmalate = (2S)-2-isopropylmalate. Its pathway is amino-acid biosynthesis; L-leucine biosynthesis; L-leucine from 3-methyl-2-oxobutanoate: step 2/4. Catalyzes the isomerization between 2-isopropylmalate and 3-isopropylmalate, via the formation of 2-isopropylmaleate. The sequence is that of 3-isopropylmalate dehydratase small subunit from Desulfovibrio desulfuricans (strain ATCC 27774 / DSM 6949 / MB).